The following is a 132-amino-acid chain: Large-conductance mechanosensitive channel (132 aa).

A run of 2 helical transmembrane segments spans residues 11–31 (FISR…GAFG) and 75–95 (GSFL…FLLV).

The protein belongs to the MscL family. Homopentamer.

The protein localises to the cell inner membrane. Its function is as follows. Channel that opens in response to stretch forces in the membrane lipid bilayer. May participate in the regulation of osmotic pressure changes within the cell. The polypeptide is Large-conductance mechanosensitive channel (Synechococcus sp. (strain JA-2-3B'a(2-13)) (Cyanobacteria bacterium Yellowstone B-Prime)).